The primary structure comprises 222 residues: Acyl-protein thioesterase 1 homolog 2 (222 aa).

Residues S116, D169, and H202 each act as charge relay system in the active site.

The protein belongs to the AB hydrolase superfamily. AB hydrolase 2 family.

The protein resides in the cytoplasm. It localises to the nucleus. The catalysed reaction is S-hexadecanoyl-L-cysteinyl-[protein] + H2O = L-cysteinyl-[protein] + hexadecanoate + H(+). Functionally, hydrolyzes fatty acids from S-acylated cysteine residues in proteins with a strong preference for palmitoylated G-alpha proteins over other acyl substrates. Mediates the deacylation of G-alpha proteins such as GPA1 in vivo, but has weak or no activity toward palmitoylated Ras proteins. Has weak lysophospholipase activity in vitro; however such activity may not exist in vivo. The chain is Acyl-protein thioesterase 1 homolog 2 from Dictyostelium discoideum (Social amoeba).